The sequence spans 385 residues: S-adenosylmethionine synthase (385 aa).

His-16 provides a ligand contact to ATP. Asp-18 contributes to the Mg(2+) binding site. Glu-44 contacts K(+). Glu-57 and Gln-100 together coordinate L-methionine. A flexible loop region spans residues 100–110; that stretch reads QSPDINQGVDR. ATP is bound by residues 164-166, 230-231, Asp-239, 245-246, Ala-262, and Lys-266; these read DGK, KF, and RK. Asp-239 is an L-methionine binding site. Lys-270 contributes to the L-methionine binding site.

This sequence belongs to the AdoMet synthase family. As to quaternary structure, homotetramer; dimer of dimers. Requires Mg(2+) as cofactor. K(+) serves as cofactor.

The protein localises to the cytoplasm. The enzyme catalyses L-methionine + ATP + H2O = S-adenosyl-L-methionine + phosphate + diphosphate. The protein operates within amino-acid biosynthesis; S-adenosyl-L-methionine biosynthesis; S-adenosyl-L-methionine from L-methionine: step 1/1. Its function is as follows. Catalyzes the formation of S-adenosylmethionine (AdoMet) from methionine and ATP. The overall synthetic reaction is composed of two sequential steps, AdoMet formation and the subsequent tripolyphosphate hydrolysis which occurs prior to release of AdoMet from the enzyme. The polypeptide is S-adenosylmethionine synthase (Helicobacter pylori (strain P12)).